A 297-amino-acid polypeptide reads, in one-letter code: N-acetylmuramic acid 6-phosphate etherase (297 aa).

Residues 56–219 enclose the SIS domain; the sequence is AIEAFNKGGR…STISMIGIGK (164 aa). The active-site Proton donor is Glu84. Glu115 is an active-site residue.

Belongs to the GCKR-like family. MurNAc-6-P etherase subfamily. Homodimer.

The catalysed reaction is N-acetyl-D-muramate 6-phosphate + H2O = N-acetyl-D-glucosamine 6-phosphate + (R)-lactate. It participates in amino-sugar metabolism; N-acetylmuramate degradation. Specifically catalyzes the cleavage of the D-lactyl ether substituent of MurNAc 6-phosphate, producing GlcNAc 6-phosphate and D-lactate. This chain is N-acetylmuramic acid 6-phosphate etherase, found in Lactococcus lactis subsp. lactis (strain IL1403) (Streptococcus lactis).